We begin with the raw amino-acid sequence, 396 residues long: Elongation factor Tu (396 aa).

The region spanning 10-206 (KPHVNVGTIG…ALDDYIPEPE (197 aa)) is the tr-type G domain. The segment at 19 to 26 (GHVDHGKT) is G1. A GTP-binding site is contributed by 19–26 (GHVDHGKT). Thr26 contributes to the Mg(2+) binding site. The interval 60–64 (GITIA) is G2. The interval 81-84 (DCPG) is G3. Residues 81–85 (DCPGH) and 136–139 (NKAD) contribute to the GTP site. The segment at 136–139 (NKAD) is G4. The segment at 174-176 (SAL) is G5.

This sequence belongs to the TRAFAC class translation factor GTPase superfamily. Classic translation factor GTPase family. EF-Tu/EF-1A subfamily. In terms of assembly, monomer.

The protein resides in the cytoplasm. The catalysed reaction is GTP + H2O = GDP + phosphate + H(+). GTP hydrolase that promotes the GTP-dependent binding of aminoacyl-tRNA to the A-site of ribosomes during protein biosynthesis. In Methylococcus capsulatus (strain ATCC 33009 / NCIMB 11132 / Bath), this protein is Elongation factor Tu.